We begin with the raw amino-acid sequence, 95 residues long: MSKDSKMRATINQKLTEMGERERLKELLRAKLTECGWRDQLKALCKDVIKEKGLEHATVEDLVVEITPKGRVLVPDSVKRELLQRIRAFLAQHAT.

Belongs to the ENY2 family. As to quaternary structure, component of the nuclear pore complex (NPC)-associated TREX-2 complex (transcription and export complex 2). Component of the SAGA transcription coactivator-HAT complex. Within the SAGA complex, participates in a subcomplex of SAGA called the DUB module (deubiquitination module).

The protein localises to the nucleus. Its subcellular location is the nucleoplasm. Involved in mRNA export coupled transcription activation by association with both the TREX-2 and the SAGA complexes. The transcription regulatory histone acetylation (HAT) complex SAGA is a multiprotein complex that activates transcription by remodeling chromatin and mediating histone acetylation and deubiquitination. Within the SAGA complex, participates in a subcomplex that specifically deubiquitinates histones. The SAGA complex is recruited to specific gene promoters by activators, where it is required for transcription. The TREX-2 complex functions in docking export-competent ribonucleoprotein particles (mRNPs) to the nuclear entrance of the nuclear pore complex (nuclear basket). TREX-2 participates in mRNA export and accurate chromatin positioning in the nucleus by tethering genes to the nuclear periphery. This is Transcription and mRNA export factor ENY2-1 (eny2-1) from Salmo salar (Atlantic salmon).